An 85-amino-acid chain; its full sequence is Protein MC005 (85 aa).

In terms of assembly, interacts with host IKBKG; this interaction prevents NF-kappa-B activation.

Its subcellular location is the host cytoplasm. In terms of biological role, plays a role in the inhibition of the host NF-kappa-B pathway by preventing ubiquitin binding-dependent regulation of host IKBKB activation by IKBKG/NEMO. The sequence is that of Protein MC005 (MC005L) from Molluscum contagiosum virus subtype 1 (MOCV).